A 755-amino-acid polypeptide reads, in one-letter code: Polyribonucleotide nucleotidyltransferase (755 aa).

The Mg(2+) site is built by aspartate 545 and aspartate 551. The KH domain occupies 611–670 (PRITAITVPVNKIGEVIGPKGKTINSITEETGANISIEEDGTVYVSAASGAAAEAAIEKI). Residues 682-751 (GERFLGTVVK…NRGKISLAPV (70 aa)) enclose the S1 motif domain.

The protein belongs to the polyribonucleotide nucleotidyltransferase family. Mg(2+) serves as cofactor.

It is found in the cytoplasm. It carries out the reaction RNA(n+1) + phosphate = RNA(n) + a ribonucleoside 5'-diphosphate. Functionally, involved in mRNA degradation. Catalyzes the phosphorolysis of single-stranded polyribonucleotides processively in the 3'- to 5'-direction. The polypeptide is Polyribonucleotide nucleotidyltransferase (Corynebacterium diphtheriae (strain ATCC 700971 / NCTC 13129 / Biotype gravis)).